The primary structure comprises 246 residues: tRNA pseudouridine synthase A (246 aa).

Residue Asp53 is the Nucleophile of the active site. Tyr111 lines the substrate pocket.

This sequence belongs to the tRNA pseudouridine synthase TruA family. As to quaternary structure, homodimer.

The catalysed reaction is uridine(38/39/40) in tRNA = pseudouridine(38/39/40) in tRNA. Its function is as follows. Formation of pseudouridine at positions 38, 39 and 40 in the anticodon stem and loop of transfer RNAs. In Anoxybacillus flavithermus (strain DSM 21510 / WK1), this protein is tRNA pseudouridine synthase A.